We begin with the raw amino-acid sequence, 739 residues long: uncharacterized protein (739 aa).

8 helical membrane passes run 53 to 73 (LALG…ALTV), 90 to 110 (WHLF…AAIP), 114 to 134 (LMFI…GTFM), 178 to 198 (TYIL…QLGL), 421 to 441 (LIWI…VCIV), 457 to 477 (AFLR…LALM), 491 to 511 (GLAM…LPAV), and 532 to 552 (IVYF…SWMY).

Belongs to the aromatic acid exporter ArAE (TC 2.A.85) family.

It localises to the cell membrane. This is an uncharacterized protein from Gluconobacter oxydans (strain 621H) (Gluconobacter suboxydans).